Consider the following 485-residue polypeptide: UDP-N-acetylmuramoyl-L-alanyl-D-glutamate--2,6-diaminopimelate ligase (485 aa).

The UDP-N-acetyl-alpha-D-muramoyl-L-alanyl-D-glutamate site is built by L27 and S29. An ATP-binding site is contributed by 106-112 (GTSGKTS). Residues 148 to 149 (TT), S175, Q181, and R183 each bind UDP-N-acetyl-alpha-D-muramoyl-L-alanyl-D-glutamate. K215 carries the N6-carboxylysine modification. Meso-2,6-diaminopimelate-binding positions include R382, 406–409 (DNPR), G454, and E458. The short motif at 406–409 (DNPR) is the Meso-diaminopimelate recognition motif element.

It belongs to the MurCDEF family. MurE subfamily. It depends on Mg(2+) as a cofactor. Carboxylation is probably crucial for Mg(2+) binding and, consequently, for the gamma-phosphate positioning of ATP.

The protein localises to the cytoplasm. The enzyme catalyses UDP-N-acetyl-alpha-D-muramoyl-L-alanyl-D-glutamate + meso-2,6-diaminopimelate + ATP = UDP-N-acetyl-alpha-D-muramoyl-L-alanyl-gamma-D-glutamyl-meso-2,6-diaminopimelate + ADP + phosphate + H(+). It functions in the pathway cell wall biogenesis; peptidoglycan biosynthesis. In terms of biological role, catalyzes the addition of meso-diaminopimelic acid to the nucleotide precursor UDP-N-acetylmuramoyl-L-alanyl-D-glutamate (UMAG) in the biosynthesis of bacterial cell-wall peptidoglycan. The sequence is that of UDP-N-acetylmuramoyl-L-alanyl-D-glutamate--2,6-diaminopimelate ligase from Bradyrhizobium diazoefficiens (strain JCM 10833 / BCRC 13528 / IAM 13628 / NBRC 14792 / USDA 110).